We begin with the raw amino-acid sequence, 223 residues long: Trichome differentiation protein GL1 (223 aa).

HTH myb-type domains are found at residues 11-63 (NQEY…MNYL) and 64-118 (SPNV…SKKL). 2 consecutive DNA-binding regions (H-T-H motif) follow at residues 39–63 (WNRI…MNYL) and 91–114 (WSLI…NTHL).

The protein localises to the nucleus. Regulates the production of a signal that induces hair (trichome) precursor cells on leaf primordia to differentiate. This is Trichome differentiation protein GL1 (GL1) from Arabidopsis lyrata (Lyre-leaved rock-cress).